A 151-amino-acid chain; its full sequence is CD-NTase-associated protein 19 (151 aa).

Helical transmembrane passes span 25-45, 52-72, and 127-147; these read TVFNFYIAITGLLAAGIGVTL, VLFTSLMGVFVAFISFIFWKL, and ISFVIVGFTGILLAITPFLMK.

This sequence belongs to the Cap19 family.

The protein resides in the cell inner membrane. Its function is as follows. Membrane protein component of a CBASS (cyclic oligonucleotide-based antiphage signaling system) which provides immunity against bacteriophage. The CD-NTase protein synthesizes cyclic nucleotides in response to infection; these serve as specific second messenger signals. The signals activate a diverse range of effectors, leading to bacterial cell death and thus abortive phage infection. A type III CBASS system. Expression of this CBASS system (Cap17-CapW-CdnC-Cap7-Cap6-Cap18-Cap19) in a susceptible E.coli (strain JP313) confers resistance to bacteriophage lambda cI-. The polypeptide is CD-NTase-associated protein 19 (Escherichia coli).